A 987-amino-acid chain; its full sequence is AP3-complex subunit beta-A (987 aa).

Residues 586-662 form a disordered region; it reads QDQLSDLDKQ…ISETSVSADQ (77 aa). Residues 603–613 show a composition bias toward acidic residues; sequence DGSEESSETGD. The span at 614 to 631 shows a compositional bias: low complexity; it reads ENGSSDYDSESSNGSDFS.

Belongs to the adaptor complexes large subunit family. In terms of assembly, adaptor protein complex 3 (AP-3) is a heterotetramer composed of two large adaptins (delta-type subunit and beta-type subunit), a medium adaptin (mu-type subunit) and a small adaptin (sigma-type subunit).

The protein localises to the cytoplasm. The protein resides in the golgi apparatus. It is found in the cytoplasmic vesicle membrane. Part of the AP-3 complex, an adaptor-related complex which seems to be clathrin-associated. The complex is associated with the Golgi region as well as more peripheral structures. It facilitates the budding of vesicles from the Golgi membrane and may be directly involved in trafficking to the vacuole. It also function in maintaining the identity of lytic vacuoles and in regulating the transition between storage and lytic vacuoles. This is AP3-complex subunit beta-A (AP3BA) from Arabidopsis thaliana (Mouse-ear cress).